Reading from the N-terminus, the 165-residue chain is Large ribosomal subunit protein uL11A (165 aa).

Arg67 carries the N5-methylarginine modification.

It belongs to the universal ribosomal protein uL11 family. As to quaternary structure, component of the large ribosomal subunit (LSU). Mature yeast ribosomes consist of a small (40S) and a large (60S) subunit. The 40S small subunit contains 1 molecule of ribosomal RNA (18S rRNA) and at least 33 different proteins. The large 60S subunit contains 3 rRNA molecules (25S, 5.8S and 5S rRNA) and at least 46 different proteins.

Its subcellular location is the cytoplasm. The protein resides in the nucleus. It is found in the nucleolus. Functionally, this protein binds directly to 26S ribosomal RNA. Its function is as follows. Component of the ribosome, a large ribonucleoprotein complex responsible for the synthesis of proteins in the cell. The small ribosomal subunit (SSU) binds messenger RNAs (mRNAs) and translates the encoded message by selecting cognate aminoacyl-transfer RNA (tRNA) molecules. The large subunit (LSU) contains the ribosomal catalytic site termed the peptidyl transferase center (PTC), which catalyzes the formation of peptide bonds, thereby polymerizing the amino acids delivered by tRNAs into a polypeptide chain. The nascent polypeptides leave the ribosome through a tunnel in the LSU and interact with protein factors that function in enzymatic processing, targeting, and the membrane insertion of nascent chains at the exit of the ribosomal tunnel. The sequence is that of Large ribosomal subunit protein uL11A (rpl1201) from Schizosaccharomyces pombe (strain 972 / ATCC 24843) (Fission yeast).